The following is a 148-amino-acid chain: uncharacterized protein (148 aa).

The first 35 residues, 1–35 (MRCVTRTRNWWRRAARMPRAGSSAWWVAVCKQVCT), serve as a signal peptide directing secretion.

The protein resides in the secreted. This is an uncharacterized protein from Homo sapiens (Human).